Here is a 283-residue protein sequence, read N- to C-terminus: MCSTPTYCDLGKAAKDVFNKGYGFGMVKIDLKTKSCSGVEFSTSGHAYTDTGKASGNLETKYKVCNYGLIFTQKWNTDNTLGTEISWENKLAEGLKLTVDTIFVPNTGKKSGKLKASYRRDCFSVGSKVDIDFSGPTIYGWAVLAFEGWLAGYQMSFDTAKSKLCQNNFALGYKAEDFQLHTHVNDGTEFGGSIYQRVNEKIETSINLAWTAGSNNTRFGIAAKYRLDCRTSLSAKVNNASLIGLGYTQSLRPGVKLTLSALVDGKNFNAGGHKVGLGFELEA.

Residue Cys2 is modified to N-acetylcysteine. Position 4 is a phosphothreonine (Thr4). 3 positions are modified to N6-acetyllysine: Lys12, Lys15, and Lys20. 2 consecutive transmembrane segments (beta stranded) span residues 26–35 (MVKIDLKTKS) and 39–47 (VEFSTSGHA). Thr33 is subject to Phosphothreonine. Lys53 participates in a covalent cross-link: Glycyl lysine isopeptide (Lys-Gly) (interchain with G-Cter in ubiquitin). 3 beta stranded membrane-spanning segments follow: residues 54–64 (ASGNLETKYKV), 69–76 (LIFTQKWN), and 80–89 (TLGTEISWEN). Position 90 is an N6-acetyllysine (Lys90). A beta stranded transmembrane segment spans residues 95-104 (LKLTVDTIFV). Residues Lys109 and Lys110 each participate in a glycyl lysine isopeptide (Lys-Gly) (interchain with G-Cter in ubiquitin) cross-link. 10 consecutive transmembrane segments (beta stranded) span residues 111-120 (SGKLKASYRR), 123-130 (FSVGSKVD), 137-145 (TIYGWAVLA), 150-158 (LAGYQMSFD), 163-175 (KLCQNNFALGYKA), 178-185 (FQLHTHVN), 189-198 (EFGGSIYQRV), 202-211 (IETSINLAWT), 218-227 (RFGIAAKYRL), and 231-238 (TSLSAKVN). Ser241 is subject to Phosphoserine. NAD(+)-binding positions include 242–244 (LIG) and 260–264 (SALVD). Transmembrane regions (beta stranded) follow at residues 242-251 (LIGLGYTQSL) and 254-263 (GVKLTLSALV). Lys266 carries the post-translational modification N6-acetyllysine; alternate. Lys266 is covalently cross-linked (Glycyl lysine isopeptide (Lys-Gly) (interchain with G-Cter in ubiquitin); alternate). A beta stranded transmembrane segment spans residues 273 to 282 (HKVGLGFELE).

This sequence belongs to the eukaryotic mitochondrial porin family. In terms of assembly, interacts with ARMC12 in a TBC1D21-dependent manner. Interacts with MISFA. Ubiquitinated by PRKN during mitophagy, leading to its degradation and enhancement of mitophagy. Deubiquitinated by USP30. Isoform 1 is widely expressed with strong expression in atrium and ascitic tumor, lower levels in brain and very low levels in liver and kidney. Isoform 2 is also widely expressed with highest levels in brain but no expression in kidney. Also expressed in flagella of epididymal sperm.

The protein resides in the mitochondrion outer membrane. It is found in the membrane. The catalysed reaction is chloride(in) = chloride(out). It carries out the reaction K(+)(in) = K(+)(out). In terms of biological role, non-selective voltage-gated ion channel that mediates the transport of anions and cations through the mitochondrion outer membrane and plasma membrane. Forms a high-conducting channel with a stable open state and a voltage-induced closure with a mild preference for anions over cations. Involved in male fertility and sperm mitochondrial sheath formation. This is Non-selective voltage-gated ion channel VDAC3 from Rattus norvegicus (Rat).